The following is a 372-amino-acid chain: Glutamate 5-kinase (372 aa).

Lys-14 lines the ATP pocket. Residues Ser-54, Asp-141, and Asn-153 each contribute to the substrate site. ATP contacts are provided by residues 173 to 174 (TD) and 215 to 221 (SGGMLTK). The region spanning 280–358 (AGKVVVDEGA…HEIEHILGYI (79 aa)) is the PUA domain.

It belongs to the glutamate 5-kinase family.

Its subcellular location is the cytoplasm. It carries out the reaction L-glutamate + ATP = L-glutamyl 5-phosphate + ADP. It participates in amino-acid biosynthesis; L-proline biosynthesis; L-glutamate 5-semialdehyde from L-glutamate: step 1/2. Functionally, catalyzes the transfer of a phosphate group to glutamate to form L-glutamate 5-phosphate. The sequence is that of Glutamate 5-kinase from Methylobacillus flagellatus (strain ATCC 51484 / DSM 6875 / VKM B-1610 / KT).